A 607-amino-acid polypeptide reads, in one-letter code: Phosphogluconate dehydratase (607 aa).

C156 and C223 together coordinate [4Fe-4S] cluster.

Belongs to the IlvD/Edd family. Requires [4Fe-4S] cluster as cofactor.

The enzyme catalyses 6-phospho-D-gluconate = 2-dehydro-3-deoxy-6-phospho-D-gluconate + H2O. It functions in the pathway carbohydrate metabolism; Entner-Doudoroff pathway. In terms of biological role, catalyzes the dehydration of 6-phospho-D-gluconate to 2-dehydro-3-deoxy-6-phospho-D-gluconate. The chain is Phosphogluconate dehydratase from Zymomonas mobilis subsp. mobilis (strain ATCC 31821 / ZM4 / CP4).